A 302-amino-acid chain; its full sequence is Adipolin (302 aa).

The signal sequence occupies residues 1-20; the sequence is MRRWAWAAVVVLLGPQLVLL. Disordered regions lie at residues 28 to 68 and 86 to 110; these read EAQR…GPEF and ALRK…PPGA. N-linked (GlcNAc...) asparagine glycosylation occurs at N43. A compositionally biased stretch (basic and acidic residues) spans 86 to 100; that stretch reads ALRKRCGSRDKKPRD. Residues 147 to 302 form the C1q domain; the sequence is LRLVGEAFHC…SSFSGLLLGT (156 aa).

The protein belongs to the adipolin/erythroferrone family. Homomultimer; disulfide-linked. May interact with ERFE. In terms of processing, processed into Adipolin fC1QTNF12 and Adipolin gC1QTNF12 by FURIN. Insulin enhances endogenous C1QTNF12 cleavage. Predominantly expressed by adipose tissues.

The protein resides in the secreted. Its function is as follows. Insulin-sensitizing adipocyte-secreted protein (adipokine) that regulates glucose metabolism in liver and adipose tissue. Promotes glucose uptake in adipocytes and suppresses de novo glucose production in hepatocytes via the PI3K-Akt signaling pathway. Administration lead to reduction of blood glucose. Able to attenuate inflammation in fat tissue. The sequence is that of Adipolin from Homo sapiens (Human).